The sequence spans 375 residues: Cytochrome P450 monooxygenase ACRTS1 (375 aa).

Heme is bound at residue Cys-321.

It belongs to the cytochrome P450 family. The cofactor is heme.

It participates in mycotoxin biosynthesis. Cytochrome P450 monooxygenase; part of the gene cluster that mediates the biosynthesis of the host-selective toxins (HSTs) ACR-toxins responsible for brown spot of rough lemon disease by the rough lemon pathotype. ACR-toxins cause uncoupling of mitochondrial oxidative-phosphorylation similar to that of classic protonophore. The structure of the major form of ACR-toxin (ACR-toxin I) consists of an alpha-dihydropyrone ring in a 19-carbon polyalcohol, a typical polyketide structure. Minor toxins were characterized as having a pyrone ring with polyalcohol side chains different in length and showing weaker toxicity. The highly reducing polyketide synthase ACRTS2 has all necessary enzymatic domains for multiple cycles of condensation and beta-keto processing. The cytochrome P450 monooxygenase ACRTS1 has also been shown to be essential for ACR-toxin biosynthesis, however its exact role in the pathway has not been elucidated yet. This Alternaria alternata (Alternaria rot fungus) protein is Cytochrome P450 monooxygenase ACRTS1.